Reading from the N-terminus, the 790-residue chain is LMBR1 domain-containing protein 2 homolog B (790 aa).

A compositionally biased stretch (low complexity) spans 1–21 (MSSNTTTPTPTSTPTPTSSPS). The interval 1–22 (MSSNTTTPTPTSTPTPTSSPSI) is disordered. 5 helical membrane-spanning segments follow: residues 34-54 (FGNLLFFAISLVLCGVVVLIG), 66-86 (IYATFFSFLGWFMCFSIAYLV), 128-148 (FLYFGSLILCWVIFPVLQSFS), 167-187 (VILYTFMFIAGLIGIIVILSV), and 195-215 (FLSFVMLLANVYGVILITITM). Positions 236 to 266 (LRNYRVEAVVLKTELEDVKRQLIDHLKLIKT) form a coiled coil. 3 helical membrane passes run 401–421 (FIIAGLVCVCLSGIILWSEIV), 442–462 (PGIGLQIFCFIPMIYMCVCSY), and 539–559 (FTLFFPIFMIVVCVISFFNLH). 3 disordered regions span residues 630–665 (SQLDGASGAHREPSIDSSNRYKPTPTKTSINIPKLS), 701–751 (LGEK…TKDK), and 765–790 (SFQDDDDHTFDDIEMGAYGTGRKNKK). A compositionally biased stretch (polar residues) spans 644–665 (IDSSNRYKPTPTKTSINIPKLS). The span at 706 to 734 (NASNNNNNNNNNNNNNNSNNKNSNNNNNS) shows a compositional bias: low complexity. Residues 735–746 (ILTSNYESYSTP) show a composition bias toward polar residues. The segment covering 766–778 (FQDDDDHTFDDIE) has biased composition (acidic residues).

This sequence belongs to the LIMR family.

It is found in the membrane. The sequence is that of LMBR1 domain-containing protein 2 homolog B from Dictyostelium discoideum (Social amoeba).